The following is a 229-amino-acid chain: MKNINEWHHIFKLDPAKEISDEHLDQICESGTDAIIVGGTDNVTLDGVLDLLSRIRRSHMVPVVLEVSEEETLTPGFDYYFVPMVLNSKEKKYMMDIQHKAIKEFIDMMEFAEVYFEGYCILNEDAKAFQYTNCVMPDLDDVKAYAYMAEKVFHLPFFYIEYSGAYGDPTLVKEVKEELQNTQLLYGGGIETTAQAKEMKEYADTIIVGNSIYTNINEALKTVEAVKGN.

Lysine 12 is a binding site for sn-glycerol 1-phosphate. Residues aspartate 14 and threonine 40 each coordinate Mg(2+). Sn-glycerol 1-phosphate contacts are provided by residues 159 to 164 (YIEYSG), glycine 189, and 209 to 210 (GN).

The protein belongs to the GGGP/HepGP synthase family. Group I subfamily. In terms of assembly, homodimer. Requires Mg(2+) as cofactor.

It carries out the reaction sn-glycerol 1-phosphate + all-trans-heptaprenyl diphosphate = 3-heptaprenyl-sn-glycero-1-phosphate + diphosphate. It participates in membrane lipid metabolism; glycerophospholipid metabolism. Prenyltransferase that catalyzes in vivo the transfer of the heptaprenyl moiety of heptaprenyl pyrophosphate (HepPP; 35 carbon atoms) to the C3 hydroxyl of sn-glycerol-1-phosphate (G1P), producing heptaprenylglyceryl phosphate (HepGP). This reaction is an ether-bond-formation step in the biosynthesis of archaea-type G1P-based membrane lipids found in Bacillales. The sequence is that of Heptaprenylglyceryl phosphate synthase from Oceanobacillus iheyensis (strain DSM 14371 / CIP 107618 / JCM 11309 / KCTC 3954 / HTE831).